A 102-amino-acid chain; its full sequence is Chorion protein S15 (102 aa).

A signal peptide spans 1 to 18; that stretch reads MKFLIAFVAIAFFACVSA.

It belongs to the chorion protein S15/S18 family.

It localises to the secreted. In terms of biological role, chorion membrane (egg shell) protein; plays a role in protecting the egg from the environment. The chain is Chorion protein S15 (Cp15) from Drosophila grimshawi (Hawaiian fruit fly).